We begin with the raw amino-acid sequence, 500 residues long: Protein-tyrosine sulfotransferase (500 aa).

A signal peptide spans 1–24 (MQMNSVWKLSLGLLLLSSVIGSFA). Residues 25–467 (ELDFGHCETL…SVLGEMGEEK (443 aa)) lie on the Lumenal side of the membrane. Active-site residues include Arg121 and Glu142. N-linked (GlcNAc...) asparagine glycosylation is found at Asn156, Asn248, Asn315, Asn343, Asn359, and Asn395. Residues 468 to 488 (LWKFVPVALMLLLIVLFFLFV) form a helical membrane-spanning segment. Over 489–500 (NAKRRRTSKVKI) the chain is Cytoplasmic.

In terms of tissue distribution, expressed throughout the plant body, highest levels of expression are in the root apical meristem.

The protein localises to the golgi apparatus membrane. The enzyme catalyses L-tyrosyl-[protein] + 3'-phosphoadenylyl sulfate = O-sulfo-L-tyrosine-[protein] + adenosine 3',5'-bisphosphate + H(+). Its function is as follows. Catalyzes the O-sulfation of tyrosine residues within acidic motifs of polypeptides. This Arabidopsis thaliana (Mouse-ear cress) protein is Protein-tyrosine sulfotransferase (TPST).